An 818-amino-acid polypeptide reads, in one-letter code: Hillarin (818 aa).

The LIM zinc-binding domain maps to 9 to 76 (STCLRCSETV…SSHVPKSGPG (68 aa)). Positions 97-141 (FVNEQIRGTRSEVDGGPLGGSRQSTPNGYGSREISSPSQNDSDYK) are disordered. Positions 117-137 (SRQSTPNGYGSREISSPSQND) are enriched in polar residues. A coiled-coil region spans residues 216-272 (QDEWERELQRLTHKFEKELATSRRSRDEANILTMRHEQQKEDLEKNMTLRRSKKKES).

Belongs to the transglutaminase-like superfamily. Interacts with pnut. In terms of tissue distribution, localizes to the neuropil of the embryonic central nervous system (at protein level). Also detected in third instar larval brain (at protein level).

The protein localises to the cytoplasm. Its subcellular location is the cell cortex. It is found in the cleavage furrow. May act as a modulator of septin function during cytokinesis in the developing nervous system. This chain is Hillarin, found in Drosophila melanogaster (Fruit fly).